We begin with the raw amino-acid sequence, 450 residues long: Histidinol dehydrogenase (450 aa).

Positions 135, 197, and 225 each coordinate NAD(+). Thr248, Gln270, and His273 together coordinate substrate. Residues Gln270 and His273 each coordinate Zn(2+). Residues Glu339 and His340 each act as proton acceptor in the active site. Positions 340, 373, 427, and 432 each coordinate substrate. Asp373 lines the Zn(2+) pocket. His432 is a Zn(2+) binding site.

It belongs to the histidinol dehydrogenase family. It depends on Zn(2+) as a cofactor.

It catalyses the reaction L-histidinol + 2 NAD(+) + H2O = L-histidine + 2 NADH + 3 H(+). The protein operates within amino-acid biosynthesis; L-histidine biosynthesis; L-histidine from 5-phospho-alpha-D-ribose 1-diphosphate: step 9/9. Catalyzes the sequential NAD-dependent oxidations of L-histidinol to L-histidinaldehyde and then to L-histidine. The polypeptide is Histidinol dehydrogenase (Corynebacterium jeikeium (strain K411)).